A 632-amino-acid chain; its full sequence is MLLTTPSSRGSRAQSGIANVSWLALSLLLLFSPTLGSAKSAADYYVRSLPGAPEGPLLKMHAGHIEVDAQNNGNLFFWHYQNRHIANRQRTVIWLNGGPGCSSMDGALMEIGPYRLKDNHTLEYNNGSWDEFANLLFVDQPVGTGFSYVNTNSYIHELDEMSAQFITFLEKWFQLFPEYEGDDIYIAGESYAGQHIPYIAKAIQERNNKIQNDQSIRWNLRGIVIGNGWISPAQQYPSYLTFAYEEGLVTKGSSLAKDLEVYQSVCESKISASPNAINIRDCEEILQQILARTKDTNKQCYNMYDVRLRDTYPSCGMNWPTDLVDVKPYLQRPDVVQALNINPEKKSGWEECSGAVSSTFNAANSLPSVQLLPELLESGIPILLFSGDKDLICNHVGTEQLINNMKWNGGTGFETSPGVWAPRHDWTFEGEPAGIYQYARNLTYVLFYNASHMVPYDLPRQSRDMLDRFMKVDIANIGGKPADSRIDGEKLPQTSVGGHPNSTAAEQQAKEKIKETEWKAYAKSGEAALIVVIIGVTVWGFFIWRSRRRNRGYQGVYQRDIGSGSILERFHNKRSGPADVEAGDFDESELDNLHSPGLEQEHYAVGDDSDEESPNHQPAAPPSSTKPGGAQP.

A signal peptide spans 1–38 (MLLTTPSSRGSRAQSGIANVSWLALSLLLLFSPTLGSA). Residues 39 to 523 (KSAADYYVRS…KETEWKAYAK (485 aa)) are Lumenal-facing. N-linked (GlcNAc...) asparagine glycosylation is found at N119 and N126. Active-site residues include S190 and D390. N-linked (GlcNAc...) asparagine glycans are attached at residues N441 and N449. Residue H452 is part of the active site. The segment at 480–509 (KPADSRIDGEKLPQTSVGGHPNSTAAEQQA) is disordered. Residues 492–506 (PQTSVGGHPNSTAAE) are compositionally biased toward polar residues. The N-linked (GlcNAc...) asparagine glycan is linked to N501. Residues 524 to 544 (SGEAALIVVIIGVTVWGFFIW) traverse the membrane as a helical segment. The Cytoplasmic segment spans residues 545–632 (RSRRRNRGYQ…SSTKPGGAQP (88 aa)). Residues 574 to 632 (RSGPADVEAGDFDESELDNLHSPGLEQEHYAVGDDSDEESPNHQPAAPPSSTKPGGAQP) are disordered. Residues 581–590 (EAGDFDESEL) are compositionally biased toward acidic residues.

It belongs to the peptidase S10 family.

The protein localises to the golgi apparatus. Its subcellular location is the trans-Golgi network membrane. The catalysed reaction is Preferential release of a C-terminal arginine or lysine residue.. Its function is as follows. Protease with a carboxypeptidase B-like function involved in the C-terminal processing of the lysine and arginine residues from protein precursors. Promotes cell fusion and is involved in the programmed cell death. The polypeptide is Pheromone-processing carboxypeptidase kex1 (kex1) (Aspergillus fumigatus (strain CBS 144.89 / FGSC A1163 / CEA10) (Neosartorya fumigata)).